We begin with the raw amino-acid sequence, 275 residues long: Phosphate import ATP-binding protein PstB 2 (275 aa).

An ABC transporter domain is found at 29 to 270; it reads LEVKNLNIYY…PSEKKTEDYI (242 aa). 61–68 lines the ATP pocket; that stretch reads GPSGCGKS.

This sequence belongs to the ABC transporter superfamily. Phosphate importer (TC 3.A.1.7) family. The complex is composed of two ATP-binding proteins (PstB), two transmembrane proteins (PstC and PstA) and a solute-binding protein (PstS).

Its subcellular location is the cell membrane. The enzyme catalyses phosphate(out) + ATP + H2O = ADP + 2 phosphate(in) + H(+). In terms of biological role, part of the ABC transporter complex PstSACB involved in phosphate import. Responsible for energy coupling to the transport system. The sequence is that of Phosphate import ATP-binding protein PstB 2 from Bacillus licheniformis (strain ATCC 14580 / DSM 13 / JCM 2505 / CCUG 7422 / NBRC 12200 / NCIMB 9375 / NCTC 10341 / NRRL NRS-1264 / Gibson 46).